The following is a 137-amino-acid chain: Cell division protein SepF (137 aa).

Belongs to the SepF family. In terms of assembly, homodimer. Interacts with FtsZ.

It is found in the cytoplasm. In terms of biological role, cell division protein that is part of the divisome complex and is recruited early to the Z-ring. Probably stimulates Z-ring formation, perhaps through the cross-linking of FtsZ protofilaments. Its function overlaps with FtsA. The chain is Cell division protein SepF from Carboxydothermus hydrogenoformans (strain ATCC BAA-161 / DSM 6008 / Z-2901).